A 255-amino-acid polypeptide reads, in one-letter code: 3-oxo-5-alpha-steroid 4-dehydrogenase 1 (255 aa).

A run of 5 helical transmembrane segments spans residues 6 to 26, 82 to 102, 107 to 127, 142 to 162, and 205 to 225; these read LCLL…AFVG, VLLA…PVLI, PTLL…GYLQ, VTHP…VINI, and FALA…LCAL.

This sequence belongs to the steroid 5-alpha reductase family.

The protein resides in the microsome membrane. It is found in the endoplasmic reticulum membrane. It carries out the reaction a 3-oxo-5alpha-steroid + NADP(+) = a 3-oxo-Delta(4)-steroid + NADPH + H(+). It catalyses the reaction 5alpha-pregnane-3,20-dione + NADP(+) = progesterone + NADPH + H(+). The catalysed reaction is 17beta-hydroxy-5alpha-androstan-3-one + NADP(+) = testosterone + NADPH + H(+). The enzyme catalyses androst-4-ene-3,17-dione + NADPH + H(+) = 5alpha-androstan-3,17-dione + NADP(+). Functionally, converts testosterone into 5-alpha-dihydrotestosterone and progesterone or corticosterone into their corresponding 5-alpha-3-oxosteroids. It plays a central role in sexual differentiation and androgen physiology. The protein is 3-oxo-5-alpha-steroid 4-dehydrogenase 1 of Mus musculus (Mouse).